Reading from the N-terminus, the 826-residue chain is (2S)-3-sulfopropanediol dehydratase (826 aa).

Residues 33 to 695 enclose the PFL domain; it reads PRVNRLRQAF…NTNASIDGRK (663 aa). Catalysis depends on Cys464, which acts as the Cysteine radical intermediate. The active-site Proton acceptor is the Glu466. One can recognise a Glycine radical domain in the interval 706–826; it reads PVHTDGGSHD…DLIQRTELHF (121 aa). At Gly802 the chain carries Glycine radical.

It belongs to the glycyl radical enzyme (GRE) family. Requires the activating protein HpfH to generate the key active site glycyl radical on Gly-802 that is involved in catalysis.

The catalysed reaction is (2S)-3-sulfopropanediol = 3-oxopropane-1-sulfonate + H2O. It participates in organosulfur degradation; alkanesulfonate degradation. Functionally, involved in the degradation of the organosulfur compound 2(S)-dihydroxypropanesulfonate (DHPS). Catalyzes the radical-mediated dehydration of DHPS to produce 3-sulfopropionaldehyde (3-oxopropane-1-sulfonate). The protein is (2S)-3-sulfopropanediol dehydratase of Klebsiella oxytoca.